Reading from the N-terminus, the 553-residue chain is Chaperonin GroEL (553 aa).

ATP contacts are provided by residues 30 to 33 (TLGP), Lys-51, 87 to 91 (DGTTT), Gly-416, and Asp-496.

It belongs to the chaperonin (HSP60) family. Forms a cylinder of 14 subunits composed of two heptameric rings stacked back-to-back. Interacts with the co-chaperonin GroES.

The protein resides in the cytoplasm. The enzyme catalyses ATP + H2O + a folded polypeptide = ADP + phosphate + an unfolded polypeptide.. Its function is as follows. Together with its co-chaperonin GroES, plays an essential role in assisting protein folding. The GroEL-GroES system forms a nano-cage that allows encapsulation of the non-native substrate proteins and provides a physical environment optimized to promote and accelerate protein folding. This is Chaperonin GroEL from Alkalilimnicola ehrlichii (strain ATCC BAA-1101 / DSM 17681 / MLHE-1).